Consider the following 339-residue polypeptide: Transaldolase (339 aa).

Lysine 135 serves as the catalytic Schiff-base intermediate with substrate.

The protein belongs to the transaldolase family. Type 1 subfamily. As to quaternary structure, homodimer.

Its subcellular location is the cytoplasm. The enzyme catalyses D-sedoheptulose 7-phosphate + D-glyceraldehyde 3-phosphate = D-erythrose 4-phosphate + beta-D-fructose 6-phosphate. It functions in the pathway carbohydrate degradation; pentose phosphate pathway; D-glyceraldehyde 3-phosphate and beta-D-fructose 6-phosphate from D-ribose 5-phosphate and D-xylulose 5-phosphate (non-oxidative stage): step 2/3. Its function is as follows. Transaldolase is important for the balance of metabolites in the pentose-phosphate pathway. The protein is Transaldolase of Prochlorococcus marinus (strain MIT 9211).